The sequence spans 454 residues: F-box protein At1g67130 (454 aa).

An F-box domain is found at 4–53 (GETLDSIPTDLILDILSRLPTKSIARFHCVSKLWSSMLASQDFTRLFVNR).

In Arabidopsis thaliana (Mouse-ear cress), this protein is F-box protein At1g67130.